Consider the following 694-residue polypeptide: Elongation factor G (694 aa).

The region spanning 12–286 (SKLRNIGIMA…AVVDYLPSPI (275 aa)) is the tr-type G domain. Residues 21 to 28 (AHIDAGKT), 85 to 89 (DTPGH), and 139 to 142 (NKMD) contribute to the GTP site.

This sequence belongs to the TRAFAC class translation factor GTPase superfamily. Classic translation factor GTPase family. EF-G/EF-2 subfamily.

Its subcellular location is the cytoplasm. Its function is as follows. Catalyzes the GTP-dependent ribosomal translocation step during translation elongation. During this step, the ribosome changes from the pre-translocational (PRE) to the post-translocational (POST) state as the newly formed A-site-bound peptidyl-tRNA and P-site-bound deacylated tRNA move to the P and E sites, respectively. Catalyzes the coordinated movement of the two tRNA molecules, the mRNA and conformational changes in the ribosome. The chain is Elongation factor G from Pseudothermotoga lettingae (strain ATCC BAA-301 / DSM 14385 / NBRC 107922 / TMO) (Thermotoga lettingae).